The primary structure comprises 141 residues: 3-hydroxyacyl-[acyl-carrier-protein] dehydratase FabZ (141 aa).

His-48 is an active-site residue.

Belongs to the thioester dehydratase family. FabZ subfamily.

It is found in the cytoplasm. The enzyme catalyses a (3R)-hydroxyacyl-[ACP] = a (2E)-enoyl-[ACP] + H2O. Its function is as follows. Involved in unsaturated fatty acids biosynthesis. Catalyzes the dehydration of short chain beta-hydroxyacyl-ACPs and long chain saturated and unsaturated beta-hydroxyacyl-ACPs. This chain is 3-hydroxyacyl-[acyl-carrier-protein] dehydratase FabZ, found in Herpetosiphon aurantiacus (strain ATCC 23779 / DSM 785 / 114-95).